The chain runs to 43 residues: Protein PsbN (43 aa).

A helical transmembrane segment spans residues 5-27 (NLVAIFVSCLLVSLTGYALYTSF).

This sequence belongs to the PsbN family.

The protein localises to the plastid. Its subcellular location is the chloroplast thylakoid membrane. Its function is as follows. May play a role in photosystem I and II biogenesis. The chain is Protein PsbN from Ephedra sinica (Chinese ephedra).